A 274-amino-acid chain; its full sequence is Penicillin-insensitive murein endopeptidase (274 aa).

An N-terminal signal peptide occupies residues 1–19; that stretch reads MNKTAIALLALLASSASLA. Intrachain disulfides connect Cys44–Cys265, Cys187–Cys235, and Cys216–Cys223. The Zn(2+) site is built by His110, His113, Asp120, Asp147, His150, and His211. The segment at 228–274 is disordered; the sequence is LPPSGDGCGAELQSWFEPPKPGTTKPEKKTPPPLPPSCQALLDEHVI.

Belongs to the peptidase M74 family. Dimer. Zn(2+) is required as a cofactor.

It localises to the periplasm. With respect to regulation, inhibited by Zn(2+) at 10 mM and by metal chelating agents EDTA and 1,10-phenanthroline. Functionally, murein endopeptidase that cleaves the D-alanyl-meso-2,6-diamino-pimelyl amide bond that connects peptidoglycan strands. Likely plays a role in the removal of murein from the sacculus and could also play a role in the integration of nascent murein strands into the sacculus. The protein is Penicillin-insensitive murein endopeptidase (mepA) of Escherichia coli (strain K12).